A 670-amino-acid polypeptide reads, in one-letter code: DNA ligase (670 aa).

NAD(+) is bound by residues 31-35 (DAEYD), 76-77 (SL), and Glu-108. The N6-AMP-lysine intermediate role is filled by Lys-110. 4 residues coordinate NAD(+): Arg-131, Glu-166, Lys-271, and Lys-295. Zn(2+) is bound by residues Cys-388, Cys-391, Cys-406, and Cys-412. Residues 579–668 (NIGGSLSGKK…NTPALKKETS (90 aa)) enclose the BRCT domain.

Belongs to the NAD-dependent DNA ligase family. LigA subfamily. The cofactor is Mg(2+). Mn(2+) serves as cofactor.

The enzyme catalyses NAD(+) + (deoxyribonucleotide)n-3'-hydroxyl + 5'-phospho-(deoxyribonucleotide)m = (deoxyribonucleotide)n+m + AMP + beta-nicotinamide D-nucleotide.. DNA ligase that catalyzes the formation of phosphodiester linkages between 5'-phosphoryl and 3'-hydroxyl groups in double-stranded DNA using NAD as a coenzyme and as the energy source for the reaction. It is essential for DNA replication and repair of damaged DNA. The protein is DNA ligase of Neorickettsia sennetsu (strain ATCC VR-367 / Miyayama) (Ehrlichia sennetsu).